The chain runs to 150 residues: Large ribosomal subunit protein bL9 (150 aa).

The protein belongs to the bacterial ribosomal protein bL9 family.

Binds to the 23S rRNA. This Neisseria gonorrhoeae protein is Large ribosomal subunit protein bL9.